Here is a 921-residue protein sequence, read N- to C-terminus: 2-oxoadipate dehydrogenase complex component E1 (921 aa).

Lysine 184 and lysine 189 each carry N6-succinyllysine. The segment at 300–319 (GKTRGRQQSREDGDYSPNGS) is disordered. N6-succinyllysine occurs at positions 801 and 819.

This sequence belongs to the alpha-ketoglutarate dehydrogenase family. As to quaternary structure, the 2-oxoadipate dehydrogenase complex is composed of OADH (2-oxoadipate dehydrogenase; E1a), DLST (dihydrolipoamide succinyltransferase; E2) and DLD (dihydrolipoamide dehydrogenase; E3). E1a functional unit is a dimer. The cofactor is thiamine diphosphate.

It localises to the mitochondrion. The enzyme catalyses N(6)-[(R)-lipoyl]-L-lysyl-[protein] + 2-oxoadipate + H(+) = N(6)-[(R)-S(8)-glutaryldihydrolipoyl]-L-lysyl-[protein] + CO2. Its pathway is amino-acid degradation. In terms of biological role, 2-oxoadipate dehydrogenase (E1a) component of the 2-oxoadipate dehydrogenase complex (OADHC). Participates in the first step, rate limiting for the overall conversion of 2-oxoadipate (alpha-ketoadipate) to glutaryl-CoA and CO(2) catalyzed by the whole OADHC. Catalyzes the irreversible decarboxylation of 2-oxoadipate via the thiamine diphosphate (ThDP) cofactor and subsequent transfer of the decarboxylated acyl intermediate on an oxidized dihydrolipoyl group that is covalently amidated to the E2 enzyme (dihydrolipoyllysine-residue succinyltransferase or DLST). Can catalyze the decarboxylation of 2-oxoglutarate in vitro, but at a much lower rate than 2-oxoadipate. Responsible for the last step of L-lysine, L-hydroxylysine and L-tryptophan catabolism with the common product being 2-oxoadipate. The protein is 2-oxoadipate dehydrogenase complex component E1 (Dhtkd1) of Mus musculus (Mouse).